A 206-amino-acid polypeptide reads, in one-letter code: ATP phosphoribosyltransferase (206 aa).

Belongs to the ATP phosphoribosyltransferase family. Short subfamily. As to quaternary structure, heteromultimer composed of HisG and HisZ subunits.

The protein resides in the cytoplasm. The enzyme catalyses 1-(5-phospho-beta-D-ribosyl)-ATP + diphosphate = 5-phospho-alpha-D-ribose 1-diphosphate + ATP. It functions in the pathway amino-acid biosynthesis; L-histidine biosynthesis; L-histidine from 5-phospho-alpha-D-ribose 1-diphosphate: step 1/9. Catalyzes the condensation of ATP and 5-phosphoribose 1-diphosphate to form N'-(5'-phosphoribosyl)-ATP (PR-ATP). Has a crucial role in the pathway because the rate of histidine biosynthesis seems to be controlled primarily by regulation of HisG enzymatic activity. The polypeptide is ATP phosphoribosyltransferase (Brachyspira hyodysenteriae (strain ATCC 49526 / WA1)).